The chain runs to 326 residues: Ankyrin repeat domain-containing protein 9 (326 aa).

Positions 1-20 (MPWDTRPGRSANGGPEGPGA) are disordered. An ANK 1 repeat occupies 70 to 99 (SPSEALLYALVHDHQAYAHYLLATFPRCAL). The Important role in both nutrient sensing and binding/regulation of IMPDH2 signature appears at 108 to 109 (CC). 2 ANK repeats span residues 111-140 (APGPHVALAVRYNRVGILRRILRTVQDFPV) and 157-186 (GGGTSLHVACELARPECLFLLLGHGASPGL).

In terms of assembly, part of an E3 ubiquitin-protein ligase complex with Elongin BC (ELOB and ELOC), CUL5 and ANKRD9. Interacts with IMPDH2; leading to ubiquitination of IMPDH2 and its subsequent proteasomal degradation.

It is found in the cytoplasmic vesicle. The protein resides in the cytoplasm. Its subcellular location is the cytosol. It functions in the pathway protein modification; protein ubiquitination. In terms of biological role, substrate receptor subunit of a cullin-RING superfamily E3 ligase complex (CUL5-based E3 ubiquitin ligase complex) which mediates the ubiquitination and subsequent proteasomal degradation of target proteins. Depending of the metabolic state of the cell, promotes the proteasomal degradation of IMPDH2, the rate-limiting enzyme in GTP biosynthesis or protects IMPDH2 by stabilizing IMPDH2 filaments assembly. Implicated in different cellular processes, like copper homeostasis and cell proliferation. This is Ankyrin repeat domain-containing protein 9 (Ankrd9) from Mus musculus (Mouse).